The sequence spans 268 residues: Universal stress protein MT3220 (268 aa).

ATP-binding positions include G13, 107 to 113 (GSVGLDH), R117, and 120 to 121 (SV).

The protein belongs to the universal stress protein A family.

This chain is Universal stress protein MT3220, found in Mycobacterium tuberculosis (strain CDC 1551 / Oshkosh).